Consider the following 349-residue polypeptide: METPPVNTIGEKDTSQPQQEWEKNLRENLDSVIQIRQQPRDPPTETLELEVSPDPASQILEHTQGAEKLVAELEGDSHKSHGSTSQMPEALQASDLWYCPDGSFVKKIVIRGHGLDKPKLGSCCRVLALGFPFGSGPPEGWTELTMGVGPWREETWGELIEKCLESMCQGEEAELQLPGHSGPPVRLTLASFTQGRDSWELETSEKEALAREERARGTELFRAGNPEGAARCYGRALRLLLTLPPPGPPERTVLHANLAACQLLLGQPQLAAQSCDRVLEREPGHLKALYRRGVAQAALGNLEKATADLKKVLAIDPKNRAAQEELGKVVIQGKNQDAGLAQGLRKMFG.

Threonine 3 carries the post-translational modification Phosphothreonine. The disordered stretch occupies residues 36–55 (RQQPRDPPTETLELEVSPDP). 3 TPR repeats span residues 210-243 (AREERARGTELFRAGNPEGAARCYGRALRLLLTL), 252-285 (TVLHANLAACQLLLGQPQLAAQSCDRVLEREPGH), and 286-319 (LKALYRRGVAQAALGNLEKATADLKKVLAIDPKN).

In terms of assembly, forms a ternary complex with CDKN1A/p21 and HSP90AB1/Hsp90. As to expression, ubiquitously expressed with higher levels in testis.

Its function is as follows. May be involved in response to X-ray. Regulates p21 protein stability by binding to Hsp90 and p21. The sequence is that of FK506-binding protein-like (FKBPL) from Homo sapiens (Human).